A 585-amino-acid chain; its full sequence is Regulator of gene activity (585 aa).

The span at 42 to 56 shows a compositional bias: polar residues; the sequence is FQTDFANSYPGTANY. Disordered regions lie at residues 42–93, 148–191, and 349–394; these read FQTD…GNRN, GGGG…PGSK, and GVGG…KVTN. Positions 58–71 are enriched in low complexity; the sequence is QAPQQQQQQQQQPQ. Over residues 166 to 184 the composition is skewed to polar residues; it reads PSLTNARGQNDQTLPQSNP. The span at 349 to 367 shows a compositional bias: gly residues; it reads GVGGGLGSGSGSSGSGAGG. Polar residues predominate over residues 372 to 388; that stretch reads DNSSNDKLVKSGVQTSP.

Belongs to the CNOT2/3/5 family. Component of the CCR4-NOT complex composed of at least Pop2/Caf1-55, Ccr4, Not1, Rga/Not2, and Not3. Expressed in heterogeneous levels between adjacent germline stem cells (at protein level).

It localises to the cytoplasm. Functionally, component of the CCR4-NOT complex which is one of the major cellular mRNA deadenylases and is linked to various cellular processes including bulk mRNA degradation, miRNA-mediated repression, translational repression during translational initiation and general transcription regulation. Additional complex functions may be a consequence of its influence on mRNA expression. Essential for viability. Acts as a suppressor of position effect variegation (PEV) at the white locus and regulates the expression of several unrelated genes. Plays a role in germline stem cell differentiation in the ovaries. The chain is Regulator of gene activity from Drosophila melanogaster (Fruit fly).